A 121-amino-acid chain; its full sequence is Phosphoribosyl-ATP pyrophosphatase (121 aa).

This sequence belongs to the PRA-PH family.

The protein resides in the cytoplasm. The enzyme catalyses 1-(5-phospho-beta-D-ribosyl)-ATP + H2O = 1-(5-phospho-beta-D-ribosyl)-5'-AMP + diphosphate + H(+). It participates in amino-acid biosynthesis; L-histidine biosynthesis; L-histidine from 5-phospho-alpha-D-ribose 1-diphosphate: step 2/9. In Burkholderia cenocepacia (strain ATCC BAA-245 / DSM 16553 / LMG 16656 / NCTC 13227 / J2315 / CF5610) (Burkholderia cepacia (strain J2315)), this protein is Phosphoribosyl-ATP pyrophosphatase.